Consider the following 715-residue polypeptide: MTTTSAFMLSVRLDNVAVVAIDVPGEKVNTLKAEFAAQVRAILKQIRENKALQGVVFISAKADNFIAGADINMIGHCQNAQEAETLARQGQQLMAEIQALPVPVIAAIHGACLGGGLEMALACHRRICTDDVKTVLGLPEVQLGLLPGSGGTQRLPRLVGVSTALDMILTGKQLRARQALKAGLVDDVVPQTILLEAAVELAKKERLAQRTLPVRERILAGPLGRALLFRLVRKKTAQKTQGNYPATERIIDVIETGLAQGSSSGYDAEARAFGELAMTPQSQALRAVFFASTEVKKDPGSDAPPGPLNSVGILGGGLMGGGIAWVTACKGGLPVRIKDINTQGINHALKYSWDLLETKVRRRHIKASERDKQLALISGSTDYRGFSHRDLVIEAVFEDLPLKQQMVAEVEQNCATHTIFASNTSSLPIGDIAANAARPEQVIGLHFFSPVEKMPLVEVIPHASTSAQTIATTVKLAKKQGKTPIVVSDKAGFYVNRILAPYINEAIRMLTEGERVEHIDAALVKFGFPVGPIQLLDEVGIDTGTKIIPVLEAAYGERFSAPANVVASILNDDRKGRKNGRGFYLYGEKGRKSKKQVDPAIYKLIGVQGQSRLSAQQVAERCVMLMLNEAARCFDEKVIRSARDGDIGAVFGIGFPPFLGGPFRYMDALGPGEMVATLQRLAALYGPRYAPCEQLVRMAERREHFWTNGETDQGN.

An enoyl-CoA hydratase region spans residues 1 to 190 (MTTTSAFMLS…KAGLVDDVVP (190 aa)). The 3-hydroxyacyl-CoA dehydrogenase stretch occupies residues 306–714 (GPLNSVGILG…FWTNGETDQG (409 aa)).

It in the N-terminal section; belongs to the enoyl-CoA hydratase/isomerase family. This sequence in the central section; belongs to the 3-hydroxyacyl-CoA dehydrogenase family. As to quaternary structure, heterotetramer of two alpha chains (FadJ) and two beta chains (FadI).

It is found in the cytoplasm. The enzyme catalyses a (3S)-3-hydroxyacyl-CoA = a (2E)-enoyl-CoA + H2O. The catalysed reaction is a 4-saturated-(3S)-3-hydroxyacyl-CoA = a (3E)-enoyl-CoA + H2O. It catalyses the reaction a (3S)-3-hydroxyacyl-CoA + NAD(+) = a 3-oxoacyl-CoA + NADH + H(+). It carries out the reaction (3S)-3-hydroxybutanoyl-CoA = (3R)-3-hydroxybutanoyl-CoA. It functions in the pathway lipid metabolism; fatty acid beta-oxidation. Catalyzes the formation of a hydroxyacyl-CoA by addition of water on enoyl-CoA. Also exhibits 3-hydroxyacyl-CoA epimerase and 3-hydroxyacyl-CoA dehydrogenase activities. The sequence is that of Fatty acid oxidation complex subunit alpha from Salmonella typhi.